The following is a 296-amino-acid chain: Peptide transport system permease protein SapC (296 aa).

Residues 1–28 (MPYDSVYSEKRPPGTLRTAWRKFYSDAS) lie on the Cytoplasmic side of the membrane. Residues 29 to 49 (AMVGLYGCAGLAVLCIFGGWF) traverse the membrane as a helical segment. The Periplasmic portion of the chain corresponds to 50-98 (APYGIDQQFLGYQLLPPSWSRYGEVSFFLGTDDLGRDVLSRLLSGAAPT). The helical transmembrane segment at 99–119 (VGGAFVVTLAATICGLVLGTF) threads the bilayer. The 186-residue stretch at 99–284 (VGGAFVVTLA…ISVLLVNLLG (186 aa)) folds into the ABC transmembrane type-1 domain. Residues 120–133 (AGATHGLRSAVLNH) are Cytoplasmic-facing. Residues 134–154 (ILDTLLAIPSLLLAIIVVAFA) form a helical membrane-spanning segment. Residues 155–196 (GPSLSHAMFAVWLALLPRMVRSIYSMVHDELEKEYVIAARLD) lie on the Periplasmic side of the membrane. Residues 197-217 (GASTLNILWFAVMPNITAGLV) form a helical membrane-spanning segment. Residues 218-222 (TEITR) lie on the Cytoplasmic side of the membrane. A helical membrane pass occupies residues 223-243 (ALSMAILDIAALGFLDLGAQL). Residues 244–257 (PSPEWGAMLGDALE) are Periplasmic-facing. A helical transmembrane segment spans residues 258–278 (LIYVAPWTVMLPGAAIMISVL). The Cytoplasmic portion of the chain corresponds to 279–296 (LVNLLGDGVRRAIIAGVE).

This sequence belongs to the binding-protein-dependent transport system permease family. OppBC subfamily.

The protein resides in the cell inner membrane. Involved in a peptide intake transport system that plays a role in the resistance to antimicrobial peptides. In Escherichia coli O6:H1 (strain CFT073 / ATCC 700928 / UPEC), this protein is Peptide transport system permease protein SapC (sapC).